A 233-amino-acid polypeptide reads, in one-letter code: Phosphonates import ATP-binding protein PhnC 1 (233 aa).

In terms of domain architecture, ABC transporter spans 2-227 (LSVSGLTKRY…PAAALDREDI (226 aa)). 34–41 (GRSGAGKT) contacts ATP.

It belongs to the ABC transporter superfamily. Phosphonates importer (TC 3.A.1.9.1) family. As to quaternary structure, the complex is composed of two ATP-binding proteins (PhnC), two transmembrane proteins (PhnE) and a solute-binding protein (PhnD).

The protein resides in the cell membrane. It carries out the reaction phosphonate(out) + ATP + H2O = phosphonate(in) + ADP + phosphate + H(+). Its function is as follows. Part of the ABC transporter complex PhnCDE involved in phosphonates import. Responsible for energy coupling to the transport system. The sequence is that of Phosphonates import ATP-binding protein PhnC 1 from Natronomonas pharaonis (strain ATCC 35678 / DSM 2160 / CIP 103997 / JCM 8858 / NBRC 14720 / NCIMB 2260 / Gabara) (Halobacterium pharaonis).